The following is a 227-amino-acid chain: Triosephosphate isomerase (227 aa).

6–8 (NLK) provides a ligand contact to substrate. Catalysis depends on His85, which acts as the Electrophile. Glu152 functions as the Proton acceptor in the catalytic mechanism. Substrate contacts are provided by Gly158 and Ser188.

Belongs to the triosephosphate isomerase family. In terms of assembly, homodimer.

It is found in the cytoplasm. It carries out the reaction D-glyceraldehyde 3-phosphate = dihydroxyacetone phosphate. It functions in the pathway carbohydrate biosynthesis; gluconeogenesis. It participates in carbohydrate degradation; glycolysis; D-glyceraldehyde 3-phosphate from glycerone phosphate: step 1/1. Functionally, involved in the gluconeogenesis. Catalyzes stereospecifically the conversion of dihydroxyacetone phosphate (DHAP) to D-glyceraldehyde-3-phosphate (G3P). This Campylobacter concisus (strain 13826) protein is Triosephosphate isomerase.